The sequence spans 1096 residues: MPKRDDINSVLVIGSGPIVIGQAAEFDYSGTQACRVLREEGVRVILVNSNPATIMTDPGFADATYIEPITSEVLEKIIIKERPDAVLPTLGGQTALNAAIRLDELGILAKHGVELIGAKVEAIQKGEDRQLFKDLVIESGADVARSHVAKTLEQAVEFAEDLGYPLVIRPSFTMGGLGSGFAHTRQELERMVADGLQSSPTTEVLLEESILGWKEYELELMRDTADNTVVVCSIENVDPVGVHTGDSITVAPALTLTDREYQHMRDIGIDIIRRVGVDTGGCNIQFAVDPADGRLIVIEMNPRVSRSSALASKATGFPIAKIAAKLAIGYRLDEIPNDITKVTPASFEPTLDYVVVKVPRFAFEKFPAADAELTTTMKSVGEAMAIGRNYSTALQKALRSLEKRGSSFHWGPESRSVDELLETSRTPTDGRIVTVQQALRAGATAEQVFDATKIDPWFIDQIVLINEVADAVRDADELDAETLREAKDHGFSDAQIAEIRGLVEQEVRDARHAADIRPVYKTVDTCAGEFPALTPYHYSSYDSETEIVPSDRRKVIILGSGPNRIGQGIEFDYSCVHASFALADAGYETIMINCNPETVSTDYDTSDRLYFEPLTLEDVLEIVHVEQQAGELVGVVVQLGGQTALGLAKGLEAAGVPILGTSPSAIDLAEERGLFSGILDTAGLVAPRNGTAVAIDEAVVVAEGIGYPVLVRPSYVLGGRGMEIVFDTATLHDYFLRMADQGIIGEGKPLLIDRFLDDAIEIDIDAIYDGTELYVGGVMEHIEEAGIHSGDSSCTLPPVTLGRGQIQQVVDAARAIAEGVGVRGLLNVQFAIGAGVLYVLEANPRASRTVPFVSKALGIPLAKAASLVMVGTSIAELKASGLLPERDGSDVPMDSPVAVKEAVLPFKRFRTKDGLIVDSVLGPEMRSTGEVMGIDRDFPRAFAKSQEAAFGGLPLSGTVFVSVADRDKRSIVLPVLRLQQLGFEVLATAGTAEILSRNGIQARVVRKYSEEPAAGDSPSIVDLINRDEVDVVINTPSGRTARADGYEIRAAAVAADKALFTTIAQLTAAVASFDAIRAGFDVTSLQDYAIAREARR.

Residues 1–402 (MPKRDDINSV…ALQKALRSLE (402 aa)) form a carboxyphosphate synthetic domain region. Positions 129, 169, 175, 176, 208, 210, 215, 241, 242, 243, 285, and 299 each coordinate ATP. Residues 133 to 328 (KDLVIESGAD…IAKIAAKLAI (196 aa)) form the ATP-grasp 1 domain. Residues glutamine 285, glutamate 299, and asparagine 301 each contribute to the Mg(2+) site. Residues glutamine 285, glutamate 299, and asparagine 301 each contribute to the Mn(2+) site. Positions 403 to 547 (KRGSSFHWGP…YSSYDSETEI (145 aa)) are oligomerization domain. Residues 548 to 950 (VPSDRRKVII…AFAKSQEAAF (403 aa)) form a carbamoyl phosphate synthetic domain region. The region spanning 676–870 (SGILDTAGLV…LAKAASLVMV (195 aa)) is the ATP-grasp 2 domain. Arginine 712, arginine 754, leucine 756, glutamate 761, glycine 786, isoleucine 787, histidine 788, serine 789, glutamine 829, and glutamate 841 together coordinate ATP. Residues glutamine 829, glutamate 841, and asparagine 843 each coordinate Mg(2+). 3 residues coordinate Mn(2+): glutamine 829, glutamate 841, and asparagine 843. An MGS-like domain is found at 951-1095 (GGLPLSGTVF…QDYAIAREAR (145 aa)). The segment at 951-1096 (GGLPLSGTVF…DYAIAREARR (146 aa)) is allosteric domain.

Belongs to the CarB family. In terms of assembly, composed of two chains; the small (or glutamine) chain promotes the hydrolysis of glutamine to ammonia, which is used by the large (or ammonia) chain to synthesize carbamoyl phosphate. Tetramer of heterodimers (alpha,beta)4. Mg(2+) serves as cofactor. The cofactor is Mn(2+).

The enzyme catalyses hydrogencarbonate + L-glutamine + 2 ATP + H2O = carbamoyl phosphate + L-glutamate + 2 ADP + phosphate + 2 H(+). The catalysed reaction is hydrogencarbonate + NH4(+) + 2 ATP = carbamoyl phosphate + 2 ADP + phosphate + 2 H(+). It participates in amino-acid biosynthesis; L-arginine biosynthesis; carbamoyl phosphate from bicarbonate: step 1/1. It functions in the pathway pyrimidine metabolism; UMP biosynthesis via de novo pathway; (S)-dihydroorotate from bicarbonate: step 1/3. Its function is as follows. Large subunit of the glutamine-dependent carbamoyl phosphate synthetase (CPSase). CPSase catalyzes the formation of carbamoyl phosphate from the ammonia moiety of glutamine, carbonate, and phosphate donated by ATP, constituting the first step of 2 biosynthetic pathways, one leading to arginine and/or urea and the other to pyrimidine nucleotides. The large subunit (synthetase) binds the substrates ammonia (free or transferred from glutamine from the small subunit), hydrogencarbonate and ATP and carries out an ATP-coupled ligase reaction, activating hydrogencarbonate by forming carboxy phosphate which reacts with ammonia to form carbamoyl phosphate. The protein is Carbamoyl phosphate synthase large chain of Clavibacter michiganensis subsp. michiganensis (strain NCPPB 382).